A 497-amino-acid polypeptide reads, in one-letter code: Vacuolar-processing enzyme beta-isozyme 1 (497 aa).

A signal peptide spans 1–23 (MAARCWVWGFVVALLAVAAAADG). N-linked (GlcNAc...) asparagine glycosylation occurs at N153. Residue H180 is part of the active site. Catalysis depends on C222, which acts as the Nucleophile. C255 and C269 are disulfide-bonded. Residue N340 is glycosylated (N-linked (GlcNAc...) asparagine). 2 disulfide bridges follow: C432–C462 and C444–C479.

This sequence belongs to the peptidase C13 family. Auto-catalytic activation. In terms of tissue distribution, expressed in developing seeds.

Its subcellular location is the protein storage vacuole. It carries out the reaction Hydrolysis of proteins and small molecule substrates at -Asn-|-Xaa- bonds.. Its function is as follows. Asparagine-specific endopeptidase that may be involved in processing of proteins targeted to vacuoles. Cysteine protease required for post-translational proteolysis of seed storage proteins in the protein storage vacuole (PSV) of developing seeds, by processing of proglutelin precursor to mature glutelin subunits, thus contributing to the formation of protein crystalline structures in PSV. The polypeptide is Vacuolar-processing enzyme beta-isozyme 1 (Oryza sativa subsp. japonica (Rice)).